A 129-amino-acid chain; its full sequence is Glycine cleavage system H protein (129 aa).

Positions 24–106 (IAVIGITAYA…YGDGWLIKVR (83 aa)) constitute a Lipoyl-binding domain. Lys-65 is subject to N6-lipoyllysine.

This sequence belongs to the GcvH family. As to quaternary structure, the glycine cleavage system is composed of four proteins: P, T, L and H. (R)-lipoate is required as a cofactor.

Functionally, the glycine cleavage system catalyzes the degradation of glycine. The H protein shuttles the methylamine group of glycine from the P protein to the T protein. The chain is Glycine cleavage system H protein from Synechococcus sp. (strain JA-3-3Ab) (Cyanobacteria bacterium Yellowstone A-Prime).